Consider the following 76-residue polypeptide: Conotoxin Cal5a L1 (76 aa).

The first 22 residues, 1–22 (MRFYIGLMAALMLTSILRTDSA), serve as a signal peptide directing secretion. Residues 23 to 42 (SVDQTGAEGGLALIERVIRQ) constitute a propeptide that is removed on maturation. Pro50 bears the 4-hydroxyproline mark. Pro58 is subject to 4-hydroxyproline; in form cal5a, and form cal5b. Pro62 is subject to 4-hydroxyproline; in form cal5a, form cal5b, and form cal5c. Pro64 carries the post-translational modification 4-hydroxyproline; in form cal5a, form cal5b, form cal5c, and form cal5d.

Contains 2 disulfide bonds that can be either 'C1-C3, C2-C4' or 'C1-C4, C2-C3', since these disulfide connectivities have been observed for conotoxins with cysteine framework V (for examples, see AC P0DQQ7 and AC P81755). Post-translationally, five different peptides have been described after total venom examination by HPLC-MS. Cal5a is the longest. Cal5b-Cal5e are identical in length but are differentially hydroxylated. It is possible that hydroxylation and proteolysis at position 53 are incomplete in some of these peptides. As to expression, expressed by the venom duct.

It localises to the secreted. Probable neurotoxin with unknown target. Possibly targets ion channels. The protein is Conotoxin Cal5a L1 of Californiconus californicus (California cone).